The following is a 549-amino-acid chain: Glucose-6-phosphate isomerase (549 aa).

The active-site Proton donor is Glu355. Active-site residues include His386 and Lys514.

The protein belongs to the GPI family.

The protein resides in the cytoplasm. It catalyses the reaction alpha-D-glucose 6-phosphate = beta-D-fructose 6-phosphate. It participates in carbohydrate biosynthesis; gluconeogenesis. Its pathway is carbohydrate degradation; glycolysis; D-glyceraldehyde 3-phosphate and glycerone phosphate from D-glucose: step 2/4. Functionally, catalyzes the reversible isomerization of glucose-6-phosphate to fructose-6-phosphate. This is Glucose-6-phosphate isomerase from Cronobacter sakazakii (strain ATCC BAA-894) (Enterobacter sakazakii).